A 168-amino-acid chain; its full sequence is Protein OPG162 (168 aa).

The Intravirion segment spans residues 1–14; the sequence is MKSLNRQTVSRFKK. Residues 15–37 traverse the membrane as a helical segment; it reads LSVPAAIMMILSTIISGIGTFLH. Topologically, residues 38–168 are virion surface; the sequence is YKEELMPSAC…SVLCVKKFYK (131 aa). One can recognise a C-type lectin domain in the interval 54–163; sequence YDKHCYLDTN…CKSTQSVLCV (110 aa). 2 cysteine pairs are disulfide-bonded: Cys-75–Cys-162 and Cys-141–Cys-154. Asn-133 carries an N-linked (GlcNAc...) asparagine; by host glycan.

Belongs to the orthopoxvirus OPG162 protein family. Interacts with protein OPG161. Interacts with protein OPG164. Interacts with protein OPG190.

It is found in the virion membrane. The protein resides in the host Golgi apparatus. In terms of biological role, forms a complex with OPG162 and OPG190 to coordinate the incorporation of OPG164 into wrapped enveloped virion (EV) membranes and, subsequently, the production of actin tails. Therefore plays an essential role in efficient cell-to-cell spread of viral particles. This Vaccinia virus (strain Western Reserve) (VACV) protein is Protein OPG162 (OPG162).